Consider the following 219-residue polypeptide: Transmembrane protein 125 (219 aa).

Transmembrane regions (helical) follow at residues 36-56, 68-88, 114-134, and 147-167; these read LCFVVAVGLVAGCGAGGVALL, LATGTVLCLLALLVLVKQLMS, ALVVLLSGLVLLVTGLTLAGL, and MLSVGIALAALGSLLLLGLLL.

The protein localises to the membrane. This Homo sapiens (Human) protein is Transmembrane protein 125 (TMEM125).